The chain runs to 735 residues: Transmembrane channel-like protein 7 (735 aa).

The Extracellular segment spans residues 1–164 (MSEFGAGAEL…QSYFSFLRFL (164 aa)). Residues 165–185 (VLLNFLMFILMFSFVTLPAVI) traverse the membrane as a helical segment. The Cytoplasmic segment spans residues 186-233 (SNYGIFNSSSTKISPNNTEPYCTVYTPSGNKGLVYFYTYLKDLLTGTG). A helical membrane pass occupies residues 234–254 (FLEVTVLFYGYYTIDAAWFSV). Topologically, residues 255–258 (LRYN) are extracellular. A helical membrane pass occupies residues 259-279 (LPLAYLLTTFAYLALSFVWII). Residues 280-355 (KRSVERFRQH…TMKEKLQIYS (76 aa)) lie on the Cytoplasmic side of the membrane. The helical transmembrane segment at 356–376 (LRIFINIIVIAVLSGCFYSIY) threads the bilayer. The Extracellular segment spans residues 377–403 (RATVFSQENSSVSIRRNVMIANLLVQY). The N-linked (GlcNAc...) asparagine glycan is linked to asparagine 385. The helical transmembrane segment at 404 to 424 (LPSIVITSANFIAPQIFSFLI) threads the bilayer. The Cytoplasmic segment spans residues 425–436 (RFEDYSAAFEIR). A helical transmembrane segment spans residues 437–457 (LTLIRCVFVRLANVGVLLFSL). Residues 458–488 (WSQIHCDNDQCKACGYDYELYPCWESAVGQE) lie on the Extracellular side of the membrane. The chain crosses the membrane as a helical span at residues 489–509 (MYKLLIFDFMIIIAMTLFVDF). Residues 510–548 (PRKLLVTYCSWKLVQWWGLQEFGISDNVLEIIYGQTICW) lie on the Cytoplasmic side of the membrane. A helical transmembrane segment spans residues 549–569 (IGTFFSPLLPAIATIKYFIIF). Topologically, residues 570–594 (YIKKISLIHTRKPASRPIRASSSNF) are extracellular. A helical membrane pass occupies residues 595 to 615 (FFLAVLLIGLILAFVPLGVSI). Topologically, residues 616–634 (ALISSSKACGPFRNFNTSW) are cytoplasmic. Residues 635–655 (AIVPYTILEFPIGLQKFLYGI) form a helical membrane-spanning segment. Residues 656 to 658 (ASE) lie on the Extracellular side of the membrane. A helical membrane pass occupies residues 659-679 (AFAVPFFVIACLFMFYFIALA). Residues 680–735 (GAHKRVVEQLREQLVTESRDKLFLLEKLSEAQKNSGKPQKARKLTSSWLLEPLDKG) are Cytoplasmic-facing. The tract at residues 710-735 (AQKNSGKPQKARKLTSSWLLEPLDKG) is disordered.

The protein belongs to the TMC family.

It localises to the membrane. Functionally, probable component of an ion channel. This chain is Transmembrane channel-like protein 7 (Tmc7), found in Gallus gallus (Chicken).